Consider the following 290-residue polypeptide: Poly-beta-1,6-N-acetyl-D-glucosamine N-deacetylase (290 aa).

An N-terminal signal peptide occupies residues 1–28; it reads MKYRKFIILVLSILIILPVSTLDGHHIA. A NodB homology domain is found at 114-290; sequence RSVWINFDDM…KRWDGFHEKD (177 aa).

The protein belongs to the polysaccharide deacetylase family.

It is found in the secreted. Its subcellular location is the cell wall. Catalyzes the N-deacetylation of poly-beta-1,6-N-acetyl-D-glucosamine (PNAG, also referred to as PIA), a biofilm adhesin polysaccharide. N-deacetylation is crucial for attachment of the polysaccharide to the bacterial cell surface; it leads to the introduction of positive charges in the otherwise neutral PIA polymer, allowing electrostatic interactions. The polypeptide is Poly-beta-1,6-N-acetyl-D-glucosamine N-deacetylase (icaB) (Staphylococcus aureus (strain NCTC 8325 / PS 47)).